Consider the following 319-residue polypeptide: Transaldolase (319 aa).

Lys131 (schiff-base intermediate with substrate) is an active-site residue.

It belongs to the transaldolase family. Type 1 subfamily. As to quaternary structure, homodimer.

It localises to the cytoplasm. It carries out the reaction D-sedoheptulose 7-phosphate + D-glyceraldehyde 3-phosphate = D-erythrose 4-phosphate + beta-D-fructose 6-phosphate. It participates in carbohydrate degradation; pentose phosphate pathway; D-glyceraldehyde 3-phosphate and beta-D-fructose 6-phosphate from D-ribose 5-phosphate and D-xylulose 5-phosphate (non-oxidative stage): step 2/3. In terms of biological role, transaldolase is important for the balance of metabolites in the pentose-phosphate pathway. This is Transaldolase from Wigglesworthia glossinidia brevipalpis.